The sequence spans 418 residues: PP2A regulatory subunit TAP46 (418 aa).

Positions 367–418 (KMIQESNSAWHKDGSRSAQEDEDAEEEKARAWDDWKDDNPRGAGNKKLTPCG) are disordered. Basic and acidic residues-rich tracts occupy residues 376 to 385 (WHKDGSRSAQ) and 393 to 406 (EKAR…DDNP).

Belongs to the IGBP1/TAP42 family.

Involved in the regulation of the TOR signaling pathway. Seems to act as a regulator of PP2A catalytic activity. This is PP2A regulatory subunit TAP46 from Oryza sativa subsp. japonica (Rice).